Here is a 407-residue protein sequence, read N- to C-terminus: Putative glycosyltransferase YtcC (407 aa).

Belongs to the glycosyltransferase group 1 family. Glycosyltransferase 4 subfamily.

This is Putative glycosyltransferase YtcC (ytcC) from Bacillus subtilis (strain 168).